Reading from the N-terminus, the 1208-residue chain is MKSLAGHVVKYGKHRERRSFARISEVLELPNLIEIQTDSYQWFLDEGLGEMFEDILPIDDFNGNLSLEFVDYELKEPKYTVAEARAHDANYSAPLHVTLRLTNRETGEIKAQEVFFGDFPLMTEQGTFIINGAERVIVSQLVRSPGVYFHGKVDKNGKEGFGSTVIPNRGAWLEMETSAKDISYVRIDRTRKIPLTVLVRALGFGSDDTIFEIFGDSETLRNTVEKDLHKNASDSRTEEGLKDVYERLRPGEPKTADSSRNLLNARFFDPKRYDLANVGRYKVNKKLDLKTRLLNLTLAETLVDPETGEIIVEKGTVLTHQVMETLAPFIDNGLNSVTYYPSEDGVVTDPMTVQVIKVFSPKDPEREVNVIGNGYPESAVKTVRPADIIASMSYFLNLMEGIGNVDDIDHLGNRRIRSVGELLQNQFRIGLARMERVVRERMSIQDTETLTPQQLINIRPVVASIKEFFGSSQLSQFMDQTNPLGELTHKRRLSALGPGGLTRDRAGYEVRDVHYSHYGRMCPIETPEGPNIGLINSLSSYAKVNKFGFIETPYRRVDRETGRVTDQIDYLTADIEDHYIVAQANSPLNEDGTFAQDVVMARAQSENLEVSIDKVDYMDVSPKQVVAVATACIPFLENDDSNRALMGANMQRQAVPLINPQAPWVGTGMEYKSAHDSGAALLCKHDGVVEFVDASEIRVRRDNGALDKYAVTKFRRSNSGTSYNQRPIVHLGEKVEKGDTLADGPSMEQGEMALGQNVLVGFMTWEGYNYEDAIIMSRRLVKDDVYTSIHIEEYESEARDTKLGPEEITREIPNVGEDALKDLDEMGIIRIGAEVQDGDLLVGKVTPKGVTELSAEERLLHAIFGEKAREVRDTSLRVPHGGGGIVHDVKIFTREAGDELSPGVNMLVRVYIVQKRKIHEGDKMAGRHGNKGVVSRIMPEEDMPFLPDGTPIDIMLNPLGVPSRMNIGQVLELHLGMAARQLGIHVATPVFDGASDEDVWETVREAGMASDAKTILYDGRTGEPFDGRVSVGVMYMIKLAHMVDDKLHARSIGPYSLVTQQPLGGKAQFGGQRFGEMEVWALEAYGAAYTLQEILTYKSDDVVGRVKTYEAIVKGEPIPKPGVPESFRVLVKELQSLGLDMRVLDIKDSEIQLRDMDDQDDDLITVNALTKFAEQQTAKELEKKAAEQVEDERQDIIQNFETAEDNLD.

Belongs to the RNA polymerase beta chain family. In terms of assembly, the RNAP catalytic core consists of 2 alpha, 1 beta, 1 beta' and 1 omega subunit. When a sigma factor is associated with the core the holoenzyme is formed, which can initiate transcription.

The enzyme catalyses RNA(n) + a ribonucleoside 5'-triphosphate = RNA(n+1) + diphosphate. In terms of biological role, DNA-dependent RNA polymerase catalyzes the transcription of DNA into RNA using the four ribonucleoside triphosphates as substrates. This Enterococcus faecium (Streptococcus faecium) protein is DNA-directed RNA polymerase subunit beta.